A 370-amino-acid chain; its full sequence is Lipoyl synthase, mitochondrial (370 aa).

Cys-104, Cys-109, Cys-115, Cys-135, Cys-139, Cys-142, and Ser-350 together coordinate [4Fe-4S] cluster. The 222-residue stretch at 118–339 (GGDKSKATAT…KQKALELGFL (222 aa)) folds into the Radical SAM core domain.

The protein belongs to the radical SAM superfamily. Lipoyl synthase family. [4Fe-4S] cluster serves as cofactor.

The protein resides in the mitochondrion. The enzyme catalyses [[Fe-S] cluster scaffold protein carrying a second [4Fe-4S](2+) cluster] + N(6)-octanoyl-L-lysyl-[protein] + 2 oxidized [2Fe-2S]-[ferredoxin] + 2 S-adenosyl-L-methionine + 4 H(+) = [[Fe-S] cluster scaffold protein] + N(6)-[(R)-dihydrolipoyl]-L-lysyl-[protein] + 4 Fe(3+) + 2 hydrogen sulfide + 2 5'-deoxyadenosine + 2 L-methionine + 2 reduced [2Fe-2S]-[ferredoxin]. It participates in protein modification; protein lipoylation via endogenous pathway; protein N(6)-(lipoyl)lysine from octanoyl-[acyl-carrier-protein]: step 2/2. Its function is as follows. Catalyzes the radical-mediated insertion of two sulfur atoms into the C-6 and C-8 positions of the octanoyl moiety bound to the lipoyl domains of lipoate-dependent enzymes, thereby converting the octanoylated domains into lipoylated derivatives. The sequence is that of Lipoyl synthase, mitochondrial from Kluyveromyces lactis (strain ATCC 8585 / CBS 2359 / DSM 70799 / NBRC 1267 / NRRL Y-1140 / WM37) (Yeast).